The following is a 135-amino-acid chain: Large ribosomal subunit protein bL12c (135 aa).

It belongs to the bacterial ribosomal protein bL12 family. Homodimer. Part of the ribosomal stalk of the 50S ribosomal subunit. Forms a multimeric L10(L12)X complex, where L10 forms an elongated spine to which 2 to 4 L12 dimers bind in a sequential fashion. Binds GTP-bound translation factors.

Its subcellular location is the plastid. It localises to the chloroplast. Functionally, forms part of the ribosomal stalk which helps the ribosome interact with GTP-bound translation factors. Is thus essential for accurate translation. This is Large ribosomal subunit protein bL12c from Chara vulgaris (Common stonewort).